Here is a 131-residue protein sequence, read N- to C-terminus: Glycine cleavage system H protein (131 aa).

One can recognise a Lipoyl-binding domain in the interval 24-106; it reads TVTIGITDHA…YEDGWIIKLK (83 aa). Lys-65 is subject to N6-lipoyllysine.

Belongs to the GcvH family. In terms of assembly, the glycine cleavage system is composed of four proteins: P, T, L and H. (R)-lipoate is required as a cofactor.

Its function is as follows. The glycine cleavage system catalyzes the degradation of glycine. The H protein shuttles the methylamine group of glycine from the P protein to the T protein. The protein is Glycine cleavage system H protein of Chromohalobacter salexigens (strain ATCC BAA-138 / DSM 3043 / CIP 106854 / NCIMB 13768 / 1H11).